The sequence spans 102 residues: Citrate lyase acyl carrier protein (102 aa).

The residue at position 14 (Ser14) is an O-(phosphoribosyl dephospho-coenzyme A)serine.

This sequence belongs to the CitD family. As to quaternary structure, oligomer with a subunit composition of (alpha,beta,gamma)6.

The protein localises to the cytoplasm. Functionally, covalent carrier of the coenzyme of citrate lyase. This is Citrate lyase acyl carrier protein from Streptococcus equi subsp. zooepidemicus (strain H70).